Reading from the N-terminus, the 116-residue chain is Nicotine metabolites export pump subunit NepA (116 aa).

The next 4 helical transmembrane spans lie at 10–30 (LTIW…TSLL), 42–62 (TVAV…ILKF), 67–87 (IAYA…GVLF), and 92–112 (FSWK…TLNL).

This sequence belongs to the drug/metabolite transporter (DMT) superfamily. Small multidrug resistance (SMR) (TC 2.A.7.1) family. NepA/NepB subfamily. The efflux pump is composed of NepA and NepB.

The protein resides in the cell membrane. Functionally, component of an efflux pump responsible for the transport of nicotine breakdown products, in particular methylamine, out of the cell. This pump apparently serves as a metabolic valve for nicotine catabolites and may protect the bacteria from the potentially toxic side effects of these compounds. In Paenarthrobacter nicotinovorans (Arthrobacter nicotinovorans), this protein is Nicotine metabolites export pump subunit NepA (nepA).